Consider the following 122-residue polypeptide: NADH-quinone oxidoreductase subunit A (122 aa).

The next 3 membrane-spanning stretches (helical) occupy residues 12–32 (ILLF…AGWL), 67–87 (IAIL…WAVV), and 91–111 (IGWF…VGFI).

This sequence belongs to the complex I subunit 3 family. As to quaternary structure, NDH-1 is composed of 14 different subunits. Subunits NuoA, H, J, K, L, M, N constitute the membrane sector of the complex.

The protein resides in the cell inner membrane. The enzyme catalyses a quinone + NADH + 5 H(+)(in) = a quinol + NAD(+) + 4 H(+)(out). NDH-1 shuttles electrons from NADH, via FMN and iron-sulfur (Fe-S) centers, to quinones in the respiratory chain. The immediate electron acceptor for the enzyme in this species is believed to be ubiquinone. Couples the redox reaction to proton translocation (for every two electrons transferred, four hydrogen ions are translocated across the cytoplasmic membrane), and thus conserves the redox energy in a proton gradient. The polypeptide is NADH-quinone oxidoreductase subunit A (Nitrosomonas europaea (strain ATCC 19718 / CIP 103999 / KCTC 2705 / NBRC 14298)).